A 190-amino-acid chain; its full sequence is Putative acetyltransferase DDB_G0275913 (190 aa).

Belongs to the transferase hexapeptide repeat family.

The chain is Putative acetyltransferase DDB_G0275913 from Dictyostelium discoideum (Social amoeba).